Reading from the N-terminus, the 67-residue chain is Probable tautomerase bsl7456 (67 aa).

The Proton acceptor; via imino nitrogen role is filled by Pro2.

This sequence belongs to the 4-oxalocrotonate tautomerase family.

The sequence is that of Probable tautomerase bsl7456 from Bradyrhizobium diazoefficiens (strain JCM 10833 / BCRC 13528 / IAM 13628 / NBRC 14792 / USDA 110).